The primary structure comprises 277 residues: 4-hydroxy-3-methylbut-2-enyl diphosphate reductase (277 aa).

Cys-12 is a binding site for [4Fe-4S] cluster. The (2E)-4-hydroxy-3-methylbut-2-enyl diphosphate site is built by His-36 and His-70. Dimethylallyl diphosphate contacts are provided by His-36 and His-70. His-36 and His-70 together coordinate isopentenyl diphosphate. Cys-92 lines the [4Fe-4S] cluster pocket. A (2E)-4-hydroxy-3-methylbut-2-enyl diphosphate-binding site is contributed by His-120. His-120 lines the dimethylallyl diphosphate pocket. Residue His-120 participates in isopentenyl diphosphate binding. Catalysis depends on Glu-122, which acts as the Proton donor. Thr-158 lines the (2E)-4-hydroxy-3-methylbut-2-enyl diphosphate pocket. Cys-186 lines the [4Fe-4S] cluster pocket. The (2E)-4-hydroxy-3-methylbut-2-enyl diphosphate site is built by Ser-214, Asn-216, and Ser-258. Positions 214, 216, and 258 each coordinate dimethylallyl diphosphate. Residues Ser-214, Asn-216, and Ser-258 each coordinate isopentenyl diphosphate.

This sequence belongs to the IspH family. Requires [4Fe-4S] cluster as cofactor.

It catalyses the reaction isopentenyl diphosphate + 2 oxidized [2Fe-2S]-[ferredoxin] + H2O = (2E)-4-hydroxy-3-methylbut-2-enyl diphosphate + 2 reduced [2Fe-2S]-[ferredoxin] + 2 H(+). The enzyme catalyses dimethylallyl diphosphate + 2 oxidized [2Fe-2S]-[ferredoxin] + H2O = (2E)-4-hydroxy-3-methylbut-2-enyl diphosphate + 2 reduced [2Fe-2S]-[ferredoxin] + 2 H(+). It participates in isoprenoid biosynthesis; dimethylallyl diphosphate biosynthesis; dimethylallyl diphosphate from (2E)-4-hydroxy-3-methylbutenyl diphosphate: step 1/1. The protein operates within isoprenoid biosynthesis; isopentenyl diphosphate biosynthesis via DXP pathway; isopentenyl diphosphate from 1-deoxy-D-xylulose 5-phosphate: step 6/6. Functionally, catalyzes the conversion of 1-hydroxy-2-methyl-2-(E)-butenyl 4-diphosphate (HMBPP) into a mixture of isopentenyl diphosphate (IPP) and dimethylallyl diphosphate (DMAPP). Acts in the terminal step of the DOXP/MEP pathway for isoprenoid precursor biosynthesis. The protein is 4-hydroxy-3-methylbut-2-enyl diphosphate reductase of Campylobacter jejuni subsp. jejuni serotype O:2 (strain ATCC 700819 / NCTC 11168).